The chain runs to 132 residues: Small ribosomal subunit protein uS8c (132 aa).

The protein belongs to the universal ribosomal protein uS8 family. Part of the 30S ribosomal subunit.

Its subcellular location is the plastid. It localises to the chloroplast. Functionally, one of the primary rRNA binding proteins, it binds directly to 16S rRNA central domain where it helps coordinate assembly of the platform of the 30S subunit. This chain is Small ribosomal subunit protein uS8c (rps8), found in Dioscorea elephantipes (Elephant's foot yam).